Consider the following 184-residue polypeptide: Regulatory protein RecX (184 aa).

The tract at residues 1 to 21 is disordered; it reads MTLFPLPSTSDPAEADESTKR.

It belongs to the RecX family.

It is found in the cytoplasm. Its function is as follows. Modulates RecA activity. This Mycolicibacterium vanbaalenii (strain DSM 7251 / JCM 13017 / BCRC 16820 / KCTC 9966 / NRRL B-24157 / PYR-1) (Mycobacterium vanbaalenii) protein is Regulatory protein RecX.